The primary structure comprises 323 residues: Beta-ketoacyl-[acyl-carrier-protein] synthase III (323 aa).

Residues C113 and H250 contribute to the active site. Positions 251–255 (QANRR) are ACP-binding. N280 is a catalytic residue.

It belongs to the thiolase-like superfamily. FabH family. As to quaternary structure, homodimer.

It is found in the cytoplasm. It carries out the reaction malonyl-[ACP] + acetyl-CoA + H(+) = 3-oxobutanoyl-[ACP] + CO2 + CoA. Its pathway is lipid metabolism; fatty acid biosynthesis. Its function is as follows. Catalyzes the condensation reaction of fatty acid synthesis by the addition to an acyl acceptor of two carbons from malonyl-ACP. Catalyzes the first condensation reaction which initiates fatty acid synthesis and may therefore play a role in governing the total rate of fatty acid production. Possesses both acetoacetyl-ACP synthase and acetyl transacylase activities. Its substrate specificity determines the biosynthesis of branched-chain and/or straight-chain of fatty acids. The chain is Beta-ketoacyl-[acyl-carrier-protein] synthase III from Rhizobium johnstonii (strain DSM 114642 / LMG 32736 / 3841) (Rhizobium leguminosarum bv. viciae).